The primary structure comprises 282 residues: Probable endonuclease 4 (282 aa).

The Zn(2+) site is built by H67, H107, E144, D178, H181, H215, D228, H230, and E260.

This sequence belongs to the AP endonuclease 2 family. The cofactor is Zn(2+).

It carries out the reaction Endonucleolytic cleavage to 5'-phosphooligonucleotide end-products.. Functionally, endonuclease IV plays a role in DNA repair. It cleaves phosphodiester bonds at apurinic or apyrimidinic (AP) sites, generating a 3'-hydroxyl group and a 5'-terminal sugar phosphate. The chain is Probable endonuclease 4 from Methanoculleus marisnigri (strain ATCC 35101 / DSM 1498 / JR1).